Consider the following 469-residue polypeptide: ATP synthase subunit beta (469 aa).

153 to 160 contacts ATP; that stretch reads GGAGVGKT.

It belongs to the ATPase alpha/beta chains family. In terms of assembly, F-type ATPases have 2 components, CF(1) - the catalytic core - and CF(0) - the membrane proton channel. CF(1) has five subunits: alpha(3), beta(3), gamma(1), delta(1), epsilon(1). CF(0) has three main subunits: a(1), b(2) and c(9-12). The alpha and beta chains form an alternating ring which encloses part of the gamma chain. CF(1) is attached to CF(0) by a central stalk formed by the gamma and epsilon chains, while a peripheral stalk is formed by the delta and b chains.

The protein resides in the cell inner membrane. It catalyses the reaction ATP + H2O + 4 H(+)(in) = ADP + phosphate + 5 H(+)(out). Its function is as follows. Produces ATP from ADP in the presence of a proton gradient across the membrane. The catalytic sites are hosted primarily by the beta subunits. This Pseudothermotoga lettingae (strain ATCC BAA-301 / DSM 14385 / NBRC 107922 / TMO) (Thermotoga lettingae) protein is ATP synthase subunit beta.